The sequence spans 163 residues: UPF0763 protein JJD26997_0796 (163 aa).

Belongs to the UPF0763 family.

The chain is UPF0763 protein JJD26997_0796 from Campylobacter jejuni subsp. doylei (strain ATCC BAA-1458 / RM4099 / 269.97).